A 147-amino-acid chain; its full sequence is MGHFTEEDKATITSLWGKVNVEDAGGETLGRLLVVYPWTQRFFDSFGNLSSASAIMGNPKVKAHGKKVLTSLGDAIKNLDDLKGTFAQLSELHCDKLHVDPENFRLLGNVLVTVLAIHFGKEFTPEVQASWQKMVTGVASALSSRYH.

Gly-2 carries the post-translational modification N-acetylglycine. A Globin domain is found at 3 to 147; the sequence is HFTEEDKATI…VASALSSRYH (145 aa). Thr-13 is subject to Phosphothreonine. Phosphoserine is present on residues Ser-45, Ser-51, and Ser-53. Lys-60 is subject to N6-acetyllysine. His-64 lines the heme b pocket. Position 83 is an N6-acetyllysine (Lys-83). His-93 serves as a coordination point for heme b. Position 94 is an S-nitrosocysteine (Cys-94). Ser-140 is modified (phosphoserine).

This sequence belongs to the globin family. Heterotetramer of two alpha chains and two gamma chains in fetal hemoglobin (Hb F). In terms of tissue distribution, red blood cells.

Its function is as follows. Gamma chains make up the fetal hemoglobin F, in combination with alpha chains. This Pongo pygmaeus (Bornean orangutan) protein is Hemoglobin subunit gamma-1 (HBG1).